Here is a 315-residue protein sequence, read N- to C-terminus: Small ribosomal subunit biogenesis GTPase RsgA (315 aa).

Residues 79–243 (LSKESHILGA…LIDTPGIKGF (165 aa)) form the CP-type G domain. Residues 128 to 131 (NKID) and 182 to 190 (GHSGVGKSS) each bind GTP. C267, C272, H274, and C280 together coordinate Zn(2+).

It belongs to the TRAFAC class YlqF/YawG GTPase family. RsgA subfamily. Monomer. Associates with 30S ribosomal subunit, binds 16S rRNA. Requires Zn(2+) as cofactor.

The protein resides in the cytoplasm. One of several proteins that assist in the late maturation steps of the functional core of the 30S ribosomal subunit. Helps release RbfA from mature subunits. May play a role in the assembly of ribosomal proteins into the subunit. Circularly permuted GTPase that catalyzes slow GTP hydrolysis, GTPase activity is stimulated by the 30S ribosomal subunit. This is Small ribosomal subunit biogenesis GTPase RsgA from Porphyromonas gingivalis (strain ATCC 33277 / DSM 20709 / CIP 103683 / JCM 12257 / NCTC 11834 / 2561).